The primary structure comprises 398 residues: Phosphoglycerate kinase (398 aa).

Substrate contacts are provided by residues 23–25 (DFN), R38, 61–64 (HMGK), R122, and R155. ATP-binding positions include K206, G297, E328, and 354–357 (GGDS).

Belongs to the phosphoglycerate kinase family. In terms of assembly, monomer.

It localises to the cytoplasm. The catalysed reaction is (2R)-3-phosphoglycerate + ATP = (2R)-3-phospho-glyceroyl phosphate + ADP. Its pathway is carbohydrate degradation; glycolysis; pyruvate from D-glyceraldehyde 3-phosphate: step 2/5. The protein is Phosphoglycerate kinase of Clostridium botulinum (strain Loch Maree / Type A3).